The sequence spans 805 residues: Mediator of RNA polymerase II transcription subunit 25 (805 aa).

2 disordered regions span residues 308 to 332 and 647 to 691; these read NQMP…PQNT and QQPQ…NPQL. Residues 647–678 are compositionally biased toward low complexity; that stretch reads QQPQQAASQAPPQATQTTVQAPGQPQNPQPGA. The LXXLL motif signature appears at 691–695; it reads LRNLL.

The protein belongs to the Mediator complex subunit 25 family. Component of the Mediator complex.

It is found in the nucleus. Component of the Mediator complex, a coactivator involved in the regulated transcription of nearly all RNA polymerase II-dependent genes. Mediator functions as a bridge to convey information from gene-specific regulatory proteins to the basal RNA polymerase II transcription machinery. Mediator is recruited to promoters by direct interactions with regulatory proteins and serves as a scaffold for the assembly of a functional preinitiation complex with RNA polymerase II and the general transcription factors. The protein is Mediator of RNA polymerase II transcription subunit 25 (med25) of Xenopus tropicalis (Western clawed frog).